The chain runs to 373 residues: MNSLQVLTKKVLIENKAFSNYHEDDSFILQQLGLWWENGPIGFCKQCKMVTGGSMSCSDVDSYELDRALVKAVKENQTDLIKLFVLWGAEINFGIVCAKTERTKVLCIQLGADPKFLDVGLYNMFVDLIKQQKVLLAIDIYYDNISILDSFDSHDFYVLIDFIYNGFILNLDEKEKITKNTLVLKFWYKFAIEFNLVKPIRFLGKKFPHLDDWRLKTAVYLGNVDEIHHAYFQENIRLDPNHMMSLACMYPQNKLGIYYCFALGANINTALEALIRFINHELNRPFFSNYGIWSNVHFCISLGANPYTKKIQEILLREEKYDIMKLLFKKGLLSPHSILHKKILEPSEVRKIISTYQYTETFHSFSSLRDNVR.

Belongs to the asfivirus MGF 360 family.

Plays a role in virus cell tropism, and may be required for efficient virus replication in macrophages. This chain is Protein MGF 360-6L, found in Ornithodoros (relapsing fever ticks).